We begin with the raw amino-acid sequence, 223 residues long: Octanoyltransferase (223 aa).

The BPL/LPL catalytic domain maps to 32–207 (DETPDEIWLV…HFAHHLAITD (176 aa)). Substrate-binding positions include 71 to 78 (RGGQVTYH), 138 to 140 (SLG), and 151 to 153 (GLA). Cys-169 (acyl-thioester intermediate) is an active-site residue.

It belongs to the LipB family.

It is found in the cytoplasm. The catalysed reaction is octanoyl-[ACP] + L-lysyl-[protein] = N(6)-octanoyl-L-lysyl-[protein] + holo-[ACP] + H(+). It functions in the pathway protein modification; protein lipoylation via endogenous pathway; protein N(6)-(lipoyl)lysine from octanoyl-[acyl-carrier-protein]: step 1/2. Catalyzes the transfer of endogenously produced octanoic acid from octanoyl-acyl-carrier-protein onto the lipoyl domains of lipoate-dependent enzymes. Lipoyl-ACP can also act as a substrate although octanoyl-ACP is likely to be the physiological substrate. This chain is Octanoyltransferase, found in Erwinia tasmaniensis (strain DSM 17950 / CFBP 7177 / CIP 109463 / NCPPB 4357 / Et1/99).